The sequence spans 133 residues: p53 and DNA damage-regulated protein 1 (133 aa).

The protein belongs to the prefoldin subunit beta family. In terms of assembly, component of the PAQosome complex which is responsible for the biogenesis of several protein complexes and which consists of R2TP complex members RUVBL1, RUVBL2, RPAP3 and PIH1D1, URI complex members PFDN2, PFDN6, PDRG1, UXT and URI1 as well as ASDURF, POLR2E and DNAAF10/WDR92.

It is found in the cytoplasm. May play a role in chaperone-mediated protein folding. This Rattus norvegicus (Rat) protein is p53 and DNA damage-regulated protein 1 (Pdrg1).